The primary structure comprises 1461 residues: Major viral transcription factor ICP4 homolog (1461 aa).

Disordered stretches follow at residues 25 to 60, 75 to 518, 811 to 1002, and 1395 to 1461; these read AAEE…GGLF, AAGA…SREG, RPGP…PRPS, and AGGA…LLLR. Residues 75–90 are compositionally biased toward low complexity; the sequence is AAGATRPPRPPSAQQQ. Acidic residues predominate over residues 102–113; sequence VLDDEDEEEDEP. Composition is skewed to low complexity over residues 167-197 and 224-249; these read RSSP…APRR and PAAV…PVSA. Over residues 250 to 260 the composition is skewed to gly residues; that stretch reads PGGGGAPSGGG. The span at 270–285 shows a compositional bias: basic and acidic residues; that stretch reads REPLLDEPAAARRLDP. Low complexity-rich tracts occupy residues 292–308 and 353–405; these read SPVS…TTTV and GFSS…SSSS. Positions 423 to 434 are enriched in pro residues; it reads GPPPSPPAPAAA. Over residues 435 to 453 the composition is skewed to low complexity; sequence PRPSASSASATSSSAAASP. The segment covering 814–826 has biased composition (pro residues); it reads PAEPAPGLPPLWP. The span at 838–888 shows a compositional bias: low complexity; it reads PAAAGAPSGLPGSGPSSPASTKSGSSTKSSSGTKSGLSGSSGYASSPAAGP. Positions 894-903 are enriched in basic residues; sequence RRKKKRRAPG. The segment covering 944–965 has biased composition (low complexity); it reads LGLGPAPDPAPALVSSSSSSSS.

This sequence belongs to the herpesviridae ICP4 family. A long stretch of serine residues may be a major site of phosphorylation.

The protein localises to the host nucleus. Functionally, this IE protein is a multifunctional protein capable of migrating to the nucleus, binding to DNA, trans-activating other viral genes, and autoregulating its own synthesis. This chain is Major viral transcription factor ICP4 homolog (IE), found in Sus scrofa (Pig).